The following is a 138-amino-acid chain: Large ribosomal subunit protein bL17 (138 aa).

The protein belongs to the bacterial ribosomal protein bL17 family. In terms of assembly, part of the 50S ribosomal subunit. Contacts protein L32.

The chain is Large ribosomal subunit protein bL17 from Jannaschia sp. (strain CCS1).